A 316-amino-acid chain; its full sequence is tRNA dimethylallyltransferase (316 aa).

27–34 (GATATGKT) contributes to the ATP binding site. Substrate is bound at residue 29–34 (TATGKT). The segment at 52–55 (DSRQ) is interaction with substrate tRNA.

This sequence belongs to the IPP transferase family. As to quaternary structure, monomer. Mg(2+) serves as cofactor.

The catalysed reaction is adenosine(37) in tRNA + dimethylallyl diphosphate = N(6)-dimethylallyladenosine(37) in tRNA + diphosphate. In terms of biological role, catalyzes the transfer of a dimethylallyl group onto the adenine at position 37 in tRNAs that read codons beginning with uridine, leading to the formation of N6-(dimethylallyl)adenosine (i(6)A). This Treponema pallidum (strain Nichols) protein is tRNA dimethylallyltransferase.